Here is a 344-residue protein sequence, read N- to C-terminus: Dihydroorotase (344 aa).

Zn(2+) contacts are provided by His-13 and His-15. Substrate contacts are provided by residues 15–17 and Asn-41; that span reads HLR. Lys-98, His-135, and His-173 together coordinate Zn(2+). Lys-98 carries the post-translational modification N6-carboxylysine. His-135 contacts substrate. Substrate is bound at residue Leu-218. Asp-247 is a Zn(2+) binding site. Asp-247 is an active-site residue. 2 residues coordinate substrate: His-251 and Ala-263.

It belongs to the metallo-dependent hydrolases superfamily. DHOase family. Class II DHOase subfamily. In terms of assembly, homodimer. The cofactor is Zn(2+).

It catalyses the reaction (S)-dihydroorotate + H2O = N-carbamoyl-L-aspartate + H(+). It functions in the pathway pyrimidine metabolism; UMP biosynthesis via de novo pathway; (S)-dihydroorotate from bicarbonate: step 3/3. In terms of biological role, catalyzes the reversible cyclization of carbamoyl aspartate to dihydroorotate. In Neisseria gonorrhoeae (strain ATCC 700825 / FA 1090), this protein is Dihydroorotase.